The chain runs to 690 residues: Glycine--tRNA ligase beta subunit (690 aa).

This sequence belongs to the class-II aminoacyl-tRNA synthetase family. As to quaternary structure, tetramer of two alpha and two beta subunits.

The protein localises to the cytoplasm. It catalyses the reaction tRNA(Gly) + glycine + ATP = glycyl-tRNA(Gly) + AMP + diphosphate. The sequence is that of Glycine--tRNA ligase beta subunit from Pediococcus pentosaceus (strain ATCC 25745 / CCUG 21536 / LMG 10740 / 183-1w).